We begin with the raw amino-acid sequence, 439 residues long: Xylose isomerase (439 aa).

Residues histidine 99 and aspartate 102 contribute to the active site. Mg(2+)-binding residues include glutamate 230, glutamate 266, histidine 269, aspartate 294, aspartate 305, aspartate 307, and aspartate 337.

This sequence belongs to the xylose isomerase family. As to quaternary structure, homotetramer. It depends on Mg(2+) as a cofactor.

It is found in the cytoplasm. The enzyme catalyses alpha-D-xylose = alpha-D-xylulofuranose. This chain is Xylose isomerase, found in Shouchella clausii (strain KSM-K16) (Alkalihalobacillus clausii).